We begin with the raw amino-acid sequence, 200 residues long: MELQVVGANALTVSETTFGREFNEALIHQVVVAYAAGARQGSRAQKTRAEVSGSGKKPWRQKGTGRARSGDIKSPIWRSGGTTFAAKPQDHSQKVNKKMYRGAIKSILSELVRQERLVVVEKFEVEAPKTKFLVQKLKDLALNDALIITASLDENLFLAARNLYKVDVRDVQGIDPVSLIAFDKVVITTDAVKQIEEMLA.

The disordered stretch occupies residues 43–72 (RAQKTRAEVSGSGKKPWRQKGTGRARSGDI).

It belongs to the universal ribosomal protein uL4 family. As to quaternary structure, part of the 50S ribosomal subunit.

Its function is as follows. One of the primary rRNA binding proteins, this protein initially binds near the 5'-end of the 23S rRNA. It is important during the early stages of 50S assembly. It makes multiple contacts with different domains of the 23S rRNA in the assembled 50S subunit and ribosome. In terms of biological role, forms part of the polypeptide exit tunnel. The polypeptide is Large ribosomal subunit protein uL4 (Haemophilus ducreyi (strain 35000HP / ATCC 700724)).